We begin with the raw amino-acid sequence, 169 residues long: dCTP pyrophosphatase 1 (169 aa).

Positions 1-26 are disordered; it reads MSASEEMLGGARGESTTATGPFSFSS. Polar residues predominate over residues 14-26; it reads ESTTATGPFSFSS. Residues His37 and 46–50 contribute to the substrate site; that span reads WEQFH. Glu62 and Glu65 together coordinate Mg(2+). Substrate is bound at residue Trp72. A Phosphoserine modification is found at Ser84. 2 residues coordinate Mg(2+): Glu94 and Asp97. Position 101 (Tyr101) interacts with substrate. Positions 143–169 are disordered; it reads LPHGATSENQAMGPADPASESTGQVST.

In terms of assembly, homotetramer. Requires Mg(2+) as cofactor.

It localises to the cytoplasm. Its subcellular location is the cytosol. It catalyses the reaction dCTP + H2O = dCMP + diphosphate + H(+). Its function is as follows. Hydrolyzes deoxynucleoside triphosphates (dNTPs) to the corresponding nucleoside monophosphates. Has a strong preference for dCTP and its analogs including 5-iodo-dCTP and 5-methyl-dCTP for which it may even have a higher efficiency. May protect DNA or RNA against the incorporation of these genotoxic nucleotide analogs through their catabolism. The polypeptide is dCTP pyrophosphatase 1 (Bos taurus (Bovine)).